The sequence spans 86 residues: Toxin Cn1 (86 aa).

The N-terminal stretch at 1 to 19 (MNSLLMITACFVLIGTVWA) is a signal peptide. Residues 20-84 (KDGYLVDAKG…TWPLPNKTCS (65 aa)) form the LCN-type CS-alpha/beta domain. Intrachain disulfides connect C30/C83, C34/C59, C43/C64, and C47/C66. At S84 the chain carries Serine amide.

This sequence belongs to the long (4 C-C) scorpion toxin superfamily. Sodium channel inhibitor family. Beta subfamily. In terms of tissue distribution, expressed by the venom gland.

The protein resides in the secreted. Beta toxins bind voltage-independently at site-4 of sodium channels (Nav) and shift the voltage of activation toward more negative potentials thereby affecting sodium channel activation and promoting spontaneous and repetitive firing. In Centruroides noxius (Mexican scorpion), this protein is Toxin Cn1.